We begin with the raw amino-acid sequence, 174 residues long: Nicotinamide-nucleotide adenylyltransferase (174 aa).

It belongs to the archaeal NMN adenylyltransferase family.

Its subcellular location is the cytoplasm. The catalysed reaction is beta-nicotinamide D-ribonucleotide + ATP + H(+) = diphosphate + NAD(+). Its pathway is cofactor biosynthesis; NAD(+) biosynthesis; NAD(+) from nicotinamide D-ribonucleotide: step 1/1. The sequence is that of Nicotinamide-nucleotide adenylyltransferase from Archaeoglobus fulgidus (strain ATCC 49558 / DSM 4304 / JCM 9628 / NBRC 100126 / VC-16).